Here is a 491-residue protein sequence, read N- to C-terminus: GTPase Der (491 aa).

EngA-type G domains lie at 54–217 (PVLA…PEYS) and 229–402 (RRIA…ESWD). GTP-binding positions include 60–67 (GRPNVGKS), 107–111 (DTGGW), 169–172 (NKVD), 235–242 (GRPNVGKS), 282–286 (DTAGI), and 347–350 (NKWD). The region spanning 403–485 (RRIPTGRLNA…PIEVNMRVRE (83 aa)) is the KH-like domain.

This sequence belongs to the TRAFAC class TrmE-Era-EngA-EngB-Septin-like GTPase superfamily. EngA (Der) GTPase family. Associates with the 50S ribosomal subunit.

GTPase that plays an essential role in the late steps of ribosome biogenesis. The protein is GTPase Der of Paenarthrobacter aurescens (strain TC1).